We begin with the raw amino-acid sequence, 263 residues long: Phosphoinositide-3-kinase-interacting protein 1 (263 aa).

The N-terminal stretch at 1–18 (MFGRLYFMLLLSVGLVDC) is a signal peptide. The Extracellular segment spans residues 19–163 (LSVVKDCITN…SGPKKKKDLG (145 aa)). One can recognise a Kringle domain in the interval 24 to 99 (DCITNNGEDY…KKEACDIRIC (76 aa)). 3 cysteine pairs are disulfide-bonded: Cys25–Cys99, Cys46–Cys80, and Cys69–Cys94. Asn103 carries an N-linked (GlcNAc...) asparagine glycan. The helical transmembrane segment at 164 to 184 (TLGYVLAVFMMAIIILLGGGI) threads the bilayer. Residues 185–263 (TMGYFYKRGR…LMGSAGTPGA (79 aa)) lie on the Cytoplasmic side of the membrane. Residues 239–263 (NNQTPTQEPVEGADPLMGSAGTPGA) form a disordered region.

Its subcellular location is the cell membrane. Negative regulator of hepatic phosphatidylinositol 3-kinase (PI3K) activity. The protein is Phosphoinositide-3-kinase-interacting protein 1 (pik3ip1) of Danio rerio (Zebrafish).